We begin with the raw amino-acid sequence, 377 residues long: Flagellin D (377 aa).

Coiled-coil stretches lie at residues 103–129 (SNSK…IAET) and 310–339 (AFQN…IKDT).

It belongs to the bacterial flagellin family. Heteromer of multiple flagellin subunits including FlaA, FlaB, FlaC, FlaD and FlaE.

The protein localises to the secreted. Its subcellular location is the bacterial flagellum. In terms of biological role, flagellin is the subunit protein which polymerizes to form the filaments of bacterial flagella. FlaD is not essential for flagellar synthesis and motility. The sequence is that of Flagellin D (flaD) from Vibrio cholerae serotype O1 (strain ATCC 39315 / El Tor Inaba N16961).